A 719-amino-acid chain; its full sequence is Potassium channel KOR2 (719 aa).

Over 1-63 (MAEEYELNEI…VIHPNGRWYR (63 aa)) the chain is Cytoplasmic. The chain crosses the membrane as a helical span at residues 64–84 (IWANMMFLWSIYSTFFTPFEF). Topologically, residues 85–93 (SFFRGLPDQ) are extracellular. The helical transmembrane segment at 94–114 (LLDLECVQLVFLADVAVHFFL) threads the bilayer. The Cytoplasmic segment spans residues 115–137 (AYRDPHTYRMVHDKRHIALRYIK). A helical membrane pass occupies residues 138–158 (GSFALDVLGCFPWDAIYKVTG). The Extracellular segment spans residues 159–164 (RVEAVR). The helical; Voltage-sensor transmembrane segment at 165-185 (WLVWVRLYRGRKVMAFFKRVE) threads the bilayer. The Cytoplasmic portion of the chain corresponds to 186–199 (KDIRVSYLLTRIVK). The helical transmembrane segment at 200–220 (LITVELYCTHTAACGFYYLAT) threads the bilayer. Topologically, residues 221-255 (TLPPAREGGTWIGSLSLGDARYINFREVDLLTRYV) are extracellular. Positions 256-275 (TSLYLAIVTMATVGYGDIHA) form an intramembrane region, pore-forming. At 276–285 (VNTREMAFTV) the chain is on the extracellular side. The chain crosses the membrane as a helical span at residues 286–306 (VYISFSIVLSAYLIGNMTALI). The Cytoplasmic portion of the chain corresponds to 307–719 (VKGSRTERFR…LEQARTVATN (413 aa)). Residue 383–503 (LFRGCSDDFL…SQILSNLLKG (121 aa)) coordinates a nucleoside 3',5'-cyclic phosphate. 5 ANK repeats span residues 523-556 (KQES…DPSK), 560-589 (DGRT…NVNS), 593-622 (FGNS…ILNL), 624-653 (DAGG…SPNC), and 657-686 (DQRT…DIQA).

This sequence belongs to the potassium channel family. Plant (TC 1.A.1.4) subfamily.

The protein localises to the membrane. Probable outward-rectifying potassium channel. This is Potassium channel KOR2 from Oryza sativa subsp. japonica (Rice).